Consider the following 228-residue polypeptide: MRFTPYLVLAPTAAVAFAQLFDPLHRTASDIQQQSQSQSVNHAQIPLAKPAVGLGPAMPPSGAPQADGPANAGGGSSVMLSDVMGRDKSINLFAGFLRSIESPSQRLDDPARNTTVLAPLNSAIENLPRKPWEDPRDYSALGANAYEGEDGQGRAQRNLRRFVEAHLIPTSPWPAGEKIKPVGGDTEVWWEEKDGVKRIQPGDIEVLNVGSSVVNGEVWILKGVRNAS.

Positions 1–18 (MRFTPYLVLAPTAAVAFA) are cleaved as a signal peptide. A disordered region spans residues 50–74 (PAVGLGPAMPPSGAPQADGPANAGG). The FAS1 domain occupies 77–225 (SVMLSDVMGR…GEVWILKGVR (149 aa)).

The protein localises to the vacuole. This Neurospora crassa (strain ATCC 24698 / 74-OR23-1A / CBS 708.71 / DSM 1257 / FGSC 987) protein is FAS1 domain-containing protein NCU02579.